A 181-amino-acid chain; its full sequence is Shikimate kinase 2 (181 aa).

12–17 is a binding site for ATP; that stretch reads GCGKTT. Mg(2+) contacts are provided by T16 and D32. Substrate-binding residues include D34, R58, and G79. Residues 112–126 form an LID domain region; sequence EAEPEVGLRPTLTGK. Position 120 (R120) interacts with ATP. A substrate-binding site is contributed by R139.

The protein belongs to the shikimate kinase family. AroL subfamily. As to quaternary structure, monomer. Mg(2+) is required as a cofactor.

The protein localises to the cytoplasm. It catalyses the reaction shikimate + ATP = 3-phosphoshikimate + ADP + H(+). Its pathway is metabolic intermediate biosynthesis; chorismate biosynthesis; chorismate from D-erythrose 4-phosphate and phosphoenolpyruvate: step 5/7. Catalyzes the specific phosphorylation of the 3-hydroxyl group of shikimic acid using ATP as a cosubstrate. The polypeptide is Shikimate kinase 2 (Escherichia fergusonii (strain ATCC 35469 / DSM 13698 / CCUG 18766 / IAM 14443 / JCM 21226 / LMG 7866 / NBRC 102419 / NCTC 12128 / CDC 0568-73)).